A 425-amino-acid polypeptide reads, in one-letter code: Glucose-6-phosphate 1-dehydrogenase (425 aa).

The NADP(+) site is built by Arg-44 and Lys-135. 4 residues coordinate substrate: His-165, Lys-169, Glu-201, and Asp-220. His-225 acts as the Proton acceptor in catalysis. Residue Lys-311 participates in substrate binding.

This sequence belongs to the glucose-6-phosphate dehydrogenase family.

It catalyses the reaction D-glucose 6-phosphate + NADP(+) = 6-phospho-D-glucono-1,5-lactone + NADPH + H(+). Its pathway is carbohydrate degradation; pentose phosphate pathway; D-ribulose 5-phosphate from D-glucose 6-phosphate (oxidative stage): step 1/3. Catalyzes the oxidation of glucose 6-phosphate to 6-phosphogluconolactone. The polypeptide is Glucose-6-phosphate 1-dehydrogenase (Helicobacter pylori (strain ATCC 700392 / 26695) (Campylobacter pylori)).